The following is an 82-amino-acid chain: Small ribosomal subunit protein bS16 (82 aa).

The protein belongs to the bacterial ribosomal protein bS16 family.

This chain is Small ribosomal subunit protein bS16, found in Edwardsiella ictaluri (strain 93-146).